A 231-amino-acid chain; its full sequence is Proteasome subunit alpha type-2 (231 aa).

It belongs to the peptidase T1A family. As to quaternary structure, the 26S proteasome consists of a 20S proteasome core and two 19S regulatory subunits. The 20S proteasome core is composed of 28 subunits that are arranged in four stacked rings, resulting in a barrel-shaped structure. The two end rings are each formed by seven alpha subunits, and the two central rings are each formed by seven beta subunits. The catalytic chamber with the active sites is on the inside of the barrel.

Its subcellular location is the cytoplasm. The protein localises to the nucleus. Functionally, the proteasome is a multicatalytic proteinase complex which is characterized by its ability to cleave peptides with Arg, Phe, Tyr, Leu, and Glu adjacent to the leaving group at neutral or slightly basic pH. The proteasome has an ATP-dependent proteolytic activity. In Caenorhabditis elegans, this protein is Proteasome subunit alpha type-2 (pas-2).